A 426-amino-acid chain; its full sequence is Diaminobutyrate--2-oxoglutarate transaminase (426 aa).

Residue Lys-274 is modified to N6-(pyridoxal phosphate)lysine.

The protein belongs to the class-III pyridoxal-phosphate-dependent aminotransferase family. The cofactor is pyridoxal 5'-phosphate.

The catalysed reaction is L-2,4-diaminobutanoate + 2-oxoglutarate = L-aspartate 4-semialdehyde + L-glutamate. Its pathway is amine and polyamine biosynthesis; ectoine biosynthesis; L-ectoine from L-aspartate 4-semialdehyde: step 1/3. Functionally, catalyzes reversively the conversion of L-aspartate beta-semialdehyde (ASA) to L-2,4-diaminobutyrate (DABA) by transamination with L-glutamate. The protein is Diaminobutyrate--2-oxoglutarate transaminase (ectB) of Oceanobacillus iheyensis (strain DSM 14371 / CIP 107618 / JCM 11309 / KCTC 3954 / HTE831).